The primary structure comprises 342 residues: Isopentenyl-diphosphate delta-isomerase (342 aa).

11–12 lines the substrate pocket; the sequence is RK. FMN contacts are provided by residues serine 68, 69 to 71, serine 99, and asparagine 127; that span reads SMT. Position 99–101 (99–101) interacts with substrate; the sequence is SMR. Substrate is bound at residue glutamine 162. Position 163 (glutamate 163) interacts with Mg(2+). FMN is bound by residues lysine 194, threonine 224, 274 to 276, and 295 to 296; these read GLK and AG.

It belongs to the IPP isomerase type 2 family. Homooctamer. Dimer of tetramers. Requires FMN as cofactor. The cofactor is NADPH. Mg(2+) is required as a cofactor.

It is found in the cytoplasm. It catalyses the reaction isopentenyl diphosphate = dimethylallyl diphosphate. In terms of biological role, involved in the biosynthesis of isoprenoids. Catalyzes the 1,3-allylic rearrangement of the homoallylic substrate isopentenyl (IPP) to its allylic isomer, dimethylallyl diphosphate (DMAPP). The protein is Isopentenyl-diphosphate delta-isomerase of Rickettsia akari (strain Hartford).